The chain runs to 228 residues: Cytochrome c oxidase subunit 2 (228 aa).

Residues 1–26 (MSTWANLGLQDSASPLMEQLIFFHDH) are Mitochondrial intermembrane-facing. The chain crosses the membrane as a helical span at residues 27 to 48 (ALLILVMITVLVGYLMFMLFFN). Residues 49-62 (NYVNRFLLHGQLIE) are Mitochondrial matrix-facing. Residues 63 to 82 (MIWTILPAIILLFIALPSLR) form a helical membrane-spanning segment. Residues 83-228 (LLYLLDEINE…FIKWISSNNS (146 aa)) lie on the Mitochondrial intermembrane side of the membrane. Positions 161, 196, 198, 200, 204, and 207 each coordinate Cu cation. Glu-198 is a Mg(2+) binding site.

Belongs to the cytochrome c oxidase subunit 2 family. Component of the cytochrome c oxidase (complex IV, CIV), a multisubunit enzyme composed of a catalytic core of 3 subunits and several supernumerary subunits. The complex exists as a monomer or a dimer and forms supercomplexes (SCs) in the inner mitochondrial membrane with ubiquinol-cytochrome c oxidoreductase (cytochrome b-c1 complex, complex III, CIII). It depends on Cu cation as a cofactor.

Its subcellular location is the mitochondrion inner membrane. The catalysed reaction is 4 Fe(II)-[cytochrome c] + O2 + 8 H(+)(in) = 4 Fe(III)-[cytochrome c] + 2 H2O + 4 H(+)(out). Component of the cytochrome c oxidase, the last enzyme in the mitochondrial electron transport chain which drives oxidative phosphorylation. The respiratory chain contains 3 multisubunit complexes succinate dehydrogenase (complex II, CII), ubiquinol-cytochrome c oxidoreductase (cytochrome b-c1 complex, complex III, CIII) and cytochrome c oxidase (complex IV, CIV), that cooperate to transfer electrons derived from NADH and succinate to molecular oxygen, creating an electrochemical gradient over the inner membrane that drives transmembrane transport and the ATP synthase. Cytochrome c oxidase is the component of the respiratory chain that catalyzes the reduction of oxygen to water. Electrons originating from reduced cytochrome c in the intermembrane space (IMS) are transferred via the dinuclear copper A center (CU(A)) of subunit 2 and heme A of subunit 1 to the active site in subunit 1, a binuclear center (BNC) formed by heme A3 and copper B (CU(B)). The BNC reduces molecular oxygen to 2 water molecules using 4 electrons from cytochrome c in the IMS and 4 protons from the mitochondrial matrix. This Drosophila melanogaster (Fruit fly) protein is Cytochrome c oxidase subunit 2 (mt:CoII).